We begin with the raw amino-acid sequence, 301 residues long: Protoheme IX farnesyltransferase (301 aa).

9 consecutive transmembrane segments (helical) span residues 29–49 (VVAL…PGAV), 51–71 (LQPL…AAAF), 101–121 (AFSF…WWVN), 123–143 (LTAW…TAYL), 150–170 (NIVI…TAVT), 177–197 (ALLL…ALAI), 223–243 (CILL…LVGM), 244–264 (SGPV…YKAW), and 281–301 (FSIY…YLWG).

This sequence belongs to the UbiA prenyltransferase family. Protoheme IX farnesyltransferase subfamily.

The protein resides in the cell inner membrane. The enzyme catalyses heme b + (2E,6E)-farnesyl diphosphate + H2O = Fe(II)-heme o + diphosphate. It participates in porphyrin-containing compound metabolism; heme O biosynthesis; heme O from protoheme: step 1/1. In terms of biological role, converts heme B (protoheme IX) to heme O by substitution of the vinyl group on carbon 2 of heme B porphyrin ring with a hydroxyethyl farnesyl side group. The polypeptide is Protoheme IX farnesyltransferase (Shewanella denitrificans (strain OS217 / ATCC BAA-1090 / DSM 15013)).